Consider the following 218-residue polypeptide: Riboflavin synthase (218 aa).

Lumazine-binding repeat units follow at residues 1 to 97 (MFTG…LGGH) and 98 to 194 (LVSG…EKLI). 2,4-dihydroxypteridine is bound by residues 4–6 (GII), 48–50 (CLT), 62–67 (DLSLET), 101–103 (GHV), lysine 136, 145–147 (SLT), and 159–164 (TIVPHT).

In terms of assembly, homotrimer.

The enzyme catalyses 2 6,7-dimethyl-8-(1-D-ribityl)lumazine + H(+) = 5-amino-6-(D-ribitylamino)uracil + riboflavin. It functions in the pathway cofactor biosynthesis; riboflavin biosynthesis; riboflavin from 2-hydroxy-3-oxobutyl phosphate and 5-amino-6-(D-ribitylamino)uracil: step 2/2. Its function is as follows. Catalyzes the dismutation of two molecules of 6,7-dimethyl-8-ribityllumazine, resulting in the formation of riboflavin and 5-amino-6-(D-ribitylamino)uracil. In Photobacterium leiognathi, this protein is Riboflavin synthase (ribE).